A 192-amino-acid chain; its full sequence is Fe/S biogenesis protein NfuA (192 aa).

Residues Cys-149 and Cys-152 each coordinate [4Fe-4S] cluster.

Belongs to the NfuA family. In terms of assembly, homodimer. Requires [4Fe-4S] cluster as cofactor.

Functionally, involved in iron-sulfur cluster biogenesis. Binds a 4Fe-4S cluster, can transfer this cluster to apoproteins, and thereby intervenes in the maturation of Fe/S proteins. Could also act as a scaffold/chaperone for damaged Fe/S proteins. This Shewanella frigidimarina (strain NCIMB 400) protein is Fe/S biogenesis protein NfuA.